We begin with the raw amino-acid sequence, 386 residues long: Antilisterial bacteriocin subtilosin biosynthesis protein AlbE (386 aa).

In terms of biological role, involved in the production of the bacteriocin subtilosin. The polypeptide is Antilisterial bacteriocin subtilosin biosynthesis protein AlbE (albE) (Bacillus subtilis).